Consider the following 283-residue polypeptide: Protein/nucleic acid deglycase HchA (283 aa).

Zn(2+) contacts are provided by histidine 86, glutamate 91, and histidine 123. Cysteine 185 (nucleophile) is an active-site residue.

It belongs to the peptidase C56 family. HchA subfamily. In terms of assembly, homodimer.

It is found in the cytoplasm. The catalysed reaction is N(omega)-(1-hydroxy-2-oxopropyl)-L-arginyl-[protein] + H2O = lactate + L-arginyl-[protein] + H(+). It catalyses the reaction N(6)-(1-hydroxy-2-oxopropyl)-L-lysyl-[protein] + H2O = lactate + L-lysyl-[protein] + H(+). The enzyme catalyses S-(1-hydroxy-2-oxopropyl)-L-cysteinyl-[protein] + H2O = lactate + L-cysteinyl-[protein] + H(+). It carries out the reaction N(omega)-(1-hydroxy-2-oxoethyl)-L-arginyl-[protein] + H2O = L-arginyl-[protein] + glycolate + H(+). The catalysed reaction is N(6)-(1-hydroxy-2-oxoethyl)-L-lysyl-[protein] + H2O = glycolate + L-lysyl-[protein] + H(+). It catalyses the reaction S-(1-hydroxy-2-oxoethyl)-L-cysteinyl-[protein] + H2O = glycolate + L-cysteinyl-[protein] + H(+). The enzyme catalyses N(2)-(1-hydroxy-2-oxopropyl)-dGTP + H2O = lactate + dGTP + H(+). It carries out the reaction N(2)-(1-hydroxy-2-oxopropyl)-GTP + H2O = lactate + GTP + H(+). The catalysed reaction is N(2)-(1-hydroxy-2-oxopropyl)-GDP + H2O = lactate + GDP + H(+). It catalyses the reaction N(2)-(1-hydroxy-2-oxopropyl)-GMP + H2O = lactate + GMP + H(+). The enzyme catalyses N(2)-(1-hydroxy-2-oxoethyl)-dGTP + H2O = dGTP + glycolate + H(+). It carries out the reaction N(2)-(1-hydroxy-2-oxoethyl)-GTP + H2O = glycolate + GTP + H(+). The catalysed reaction is N(2)-(1-hydroxy-2-oxoethyl)-GDP + H2O = glycolate + GDP + H(+). It catalyses the reaction N(2)-(1-hydroxy-2-oxoethyl)-GMP + H2O = glycolate + GMP + H(+). The enzyme catalyses an N(2)-(1-hydroxy-2-oxopropyl)-guanosine in RNA + H2O = a guanosine in RNA + lactate + H(+). It carries out the reaction an N(2)-(1-hydroxy-2-oxopropyl)-2'-deoxyguanosine in DNA + H2O = a 2'-deoxyguanosine in DNA + lactate + H(+). The catalysed reaction is an N(2)-(1-hydroxy-2-oxoethyl)-guanosine in RNA + H2O = a guanosine in RNA + glycolate + H(+). It catalyses the reaction an N(2)-(1-hydroxy-2-oxoethyl)-2'-deoxyguanosine in DNA + H2O = a 2'-deoxyguanosine in DNA + glycolate + H(+). In terms of biological role, protein and nucleotide deglycase that catalyzes the deglycation of the Maillard adducts formed between amino groups of proteins or nucleotides and reactive carbonyl groups of glyoxals. Thus, functions as a protein deglycase that repairs methylglyoxal- and glyoxal-glycated proteins, and releases repaired proteins and lactate or glycolate, respectively. Deglycates cysteine, arginine and lysine residues in proteins, and thus reactivates these proteins by reversing glycation by glyoxals. Acts on early glycation intermediates (hemithioacetals and aminocarbinols), preventing the formation of Schiff bases and advanced glycation endproducts (AGE). Also functions as a nucleotide deglycase able to repair glycated guanine in the free nucleotide pool (GTP, GDP, GMP, dGTP) and in DNA and RNA. Is thus involved in a major nucleotide repair system named guanine glycation repair (GG repair), dedicated to reversing methylglyoxal and glyoxal damage via nucleotide sanitization and direct nucleic acid repair. Plays an important role in protecting cells from carbonyl stress. This is Protein/nucleic acid deglycase HchA from Escherichia coli (strain K12 / MC4100 / BW2952).